The primary structure comprises 466 residues: MEVMPQPLTIVILAAGLGTRMKSRHAKVLHQAGGKTLLQHVIDTALELAPAERIFVVVGHQAEKVRQSVTTPGIGFIEQTEQKGTGHAVLIGRHALAGLDGHLMVLYGDCPLLRTETLRRLIAQAAEGPAAGVLLSAMMDDPYGYGRVIRDSRGHVLDVVEQKSGTPEQLAIKEANMGIYCFRAGLFWEHVGEIEPNNPAGEYYLTDMPAILHRAGHTVEAMRIDDPAEALGINDRAQLAEVDRIFRDRKRRAVMAAGVTLIQPETITIDPAAEIGQDSIIESFAQILGKTKIGENCRVGSCSIVSDSTLADEVHIGAFTIVTTSVLEHGVHAGPYARLRMENHVEAGAHIGNFVELKKTRMGKGAKANHLAYLGDSEIGARVNIGAGTITCNYDGFKKHRTGIGEGAFVGSNSTLVAPIDIGEGAYVAAGSVITNPVPPDALALGRARQEIKEEWAKKRRKLAKT.

Residues 1-236 (MEVMPQPLTI…PAEALGINDR (236 aa)) form a pyrophosphorylase region. UDP-N-acetyl-alpha-D-glucosamine-binding positions include 13–16 (LAAG), K27, Q79, 84–85 (GT), 107–109 (YGD), G146, E161, N176, and N234. D109 contacts Mg(2+). N234 contacts Mg(2+). The segment at 237–257 (AQLAEVDRIFRDRKRRAVMAA) is linker. Residues 258-466 (GVTLIQPETI…AKKRRKLAKT (209 aa)) form an N-acetyltransferase region. Positions 340 and 358 each coordinate UDP-N-acetyl-alpha-D-glucosamine. The active-site Proton acceptor is the H370. UDP-N-acetyl-alpha-D-glucosamine is bound by residues Y373 and N384. Residues A387, 393–394 (NY), S412, A430, and R447 contribute to the acetyl-CoA site.

The protein in the N-terminal section; belongs to the N-acetylglucosamine-1-phosphate uridyltransferase family. In the C-terminal section; belongs to the transferase hexapeptide repeat family. In terms of assembly, homotrimer. The cofactor is Mg(2+).

It is found in the cytoplasm. The catalysed reaction is alpha-D-glucosamine 1-phosphate + acetyl-CoA = N-acetyl-alpha-D-glucosamine 1-phosphate + CoA + H(+). It carries out the reaction N-acetyl-alpha-D-glucosamine 1-phosphate + UTP + H(+) = UDP-N-acetyl-alpha-D-glucosamine + diphosphate. Its pathway is nucleotide-sugar biosynthesis; UDP-N-acetyl-alpha-D-glucosamine biosynthesis; N-acetyl-alpha-D-glucosamine 1-phosphate from alpha-D-glucosamine 6-phosphate (route II): step 2/2. It functions in the pathway nucleotide-sugar biosynthesis; UDP-N-acetyl-alpha-D-glucosamine biosynthesis; UDP-N-acetyl-alpha-D-glucosamine from N-acetyl-alpha-D-glucosamine 1-phosphate: step 1/1. It participates in bacterial outer membrane biogenesis; LPS lipid A biosynthesis. Catalyzes the last two sequential reactions in the de novo biosynthetic pathway for UDP-N-acetylglucosamine (UDP-GlcNAc). The C-terminal domain catalyzes the transfer of acetyl group from acetyl coenzyme A to glucosamine-1-phosphate (GlcN-1-P) to produce N-acetylglucosamine-1-phosphate (GlcNAc-1-P), which is converted into UDP-GlcNAc by the transfer of uridine 5-monophosphate (from uridine 5-triphosphate), a reaction catalyzed by the N-terminal domain. The polypeptide is Bifunctional protein GlmU (Solibacter usitatus (strain Ellin6076)).